We begin with the raw amino-acid sequence, 206 residues long: Small ribosomal subunit protein uS2 (206 aa).

This sequence belongs to the universal ribosomal protein uS2 family.

The protein is Small ribosomal subunit protein uS2 of Pyrobaculum neutrophilum (strain DSM 2338 / JCM 9278 / NBRC 100436 / V24Sta) (Thermoproteus neutrophilus).